A 571-amino-acid chain; its full sequence is Proline--tRNA ligase (571 aa).

Belongs to the class-II aminoacyl-tRNA synthetase family. ProS type 1 subfamily. In terms of assembly, homodimer.

The protein localises to the cytoplasm. It carries out the reaction tRNA(Pro) + L-proline + ATP = L-prolyl-tRNA(Pro) + AMP + diphosphate. Its function is as follows. Catalyzes the attachment of proline to tRNA(Pro) in a two-step reaction: proline is first activated by ATP to form Pro-AMP and then transferred to the acceptor end of tRNA(Pro). As ProRS can inadvertently accommodate and process non-cognate amino acids such as alanine and cysteine, to avoid such errors it has two additional distinct editing activities against alanine. One activity is designated as 'pretransfer' editing and involves the tRNA(Pro)-independent hydrolysis of activated Ala-AMP. The other activity is designated 'posttransfer' editing and involves deacylation of mischarged Ala-tRNA(Pro). The misacylated Cys-tRNA(Pro) is not edited by ProRS. The polypeptide is Proline--tRNA ligase (Haemophilus ducreyi (strain 35000HP / ATCC 700724)).